The chain runs to 158 residues: 6,7-dimethyl-8-ribityllumazine synthase (158 aa).

Residues Phe22, 57–59, and 81–83 each bind 5-amino-6-(D-ribitylamino)uracil; these read AFE and AVI. 86–87 is a binding site for (2S)-2-hydroxy-3-oxobutyl phosphate; the sequence is GT. The active-site Proton donor is His89. 5-amino-6-(D-ribitylamino)uracil is bound at residue Phe114. Arg128 provides a ligand contact to (2S)-2-hydroxy-3-oxobutyl phosphate.

The protein belongs to the DMRL synthase family. In terms of assembly, forms an icosahedral capsid composed of 60 subunits, arranged as a dodecamer of pentamers.

It catalyses the reaction (2S)-2-hydroxy-3-oxobutyl phosphate + 5-amino-6-(D-ribitylamino)uracil = 6,7-dimethyl-8-(1-D-ribityl)lumazine + phosphate + 2 H2O + H(+). It participates in cofactor biosynthesis; riboflavin biosynthesis; riboflavin from 2-hydroxy-3-oxobutyl phosphate and 5-amino-6-(D-ribitylamino)uracil: step 1/2. Catalyzes the formation of 6,7-dimethyl-8-ribityllumazine by condensation of 5-amino-6-(D-ribitylamino)uracil with 3,4-dihydroxy-2-butanone 4-phosphate. This is the penultimate step in the biosynthesis of riboflavin. The polypeptide is 6,7-dimethyl-8-ribityllumazine synthase (Shewanella amazonensis (strain ATCC BAA-1098 / SB2B)).